Consider the following 402-residue polypeptide: Protein arginine methyltransferase NDUFAF7 homolog, mitochondrial (402 aa).

The protein belongs to the NDUFAF7 family.

It localises to the mitochondrion. The enzyme catalyses L-arginyl-[protein] + 2 S-adenosyl-L-methionine = N(omega),N(omega)'-dimethyl-L-arginyl-[protein] + 2 S-adenosyl-L-homocysteine + 2 H(+). In terms of biological role, arginine methyltransferase involved in the assembly or stability of mitochondrial NADH:ubiquinone oxidoreductase complex (complex I). The sequence is that of Protein arginine methyltransferase NDUFAF7 homolog, mitochondrial from Saccharomyces cerevisiae (strain ATCC 204508 / S288c) (Baker's yeast).